A 51-amino-acid chain; its full sequence is Large ribosomal subunit protein bL33 (51 aa).

Positions 1–21 (MRDKIKLESSAGTGHFYTTTK) are disordered. Positions 10 to 20 (SAGTGHFYTTT) are enriched in polar residues.

Belongs to the bacterial ribosomal protein bL33 family.

The protein is Large ribosomal subunit protein bL33 (rpmG) of Neisseria meningitidis serogroup A / serotype 4A (strain DSM 15465 / Z2491).